The following is a 400-amino-acid chain: NAD-dependent protein deacetylase sirtuin-7 (400 aa).

Residues 1 to 28 are disordered; the sequence is MAAGGLSRSERKAAERVRRLREEQQRER. The span at 8 to 28 shows a compositional bias: basic and acidic residues; that stretch reads RSERKAAERVRRLREEQQRER. The Deacetylase sirtuin-type domain occupies 82 to 329; it reads PEELQRKVRE…QLLMDELGLE (248 aa). NAD(+) contacts are provided by residues 107-126 and 167-170; these read GAGI…NGVW and QNCD. Residue His187 is the Proton acceptor of the active site. Residues Cys195, Cys198, Cys225, and Cys228 each coordinate Zn(2+). NAD(+) is bound by residues 268–270, 297–299, and Cys315; these read GSS and NLQ. Residues 354-380 are disordered; the sequence is SHSRKSLCRSREEPGPGDRGAPLSSAP. An Asymmetric dimethylarginine; alternate modification is found at Arg388. Arg388 is modified (omega-N-methylarginine; alternate).

It belongs to the sirtuin family. Class IV subfamily. In terms of assembly, interacts with UBTF and the RNA polymerase I complex. Interacts with components of the B-WICH complex, such as MYBBP1A, SMARCA5/SNF2H and BAZ1B/WSTF. Interacts with ELK4, leading to stabilization at target promoters for H3K18Ac deacetylation. Interacts with histone H2A and/or histone H2B. Interacts with DNMT1. Interacts with SIRT1. Zn(2+) is required as a cofactor. In terms of processing, phosphorylated during mitosis. Post-translationally, methylation at Arg-388 by PRMT6 inhibits the H3K18Ac histone deacetylase activity, promoting mitochondria biogenesis and maintaining mitochondria respiration. Ubiquitinated via 'Lys-63'-linked ubiquitin chains. Deubiquitinated by USP7, inhibiting the H3K18Ac histone deacetylase activity and regulating gluconeogenesis. Ubiquitinated by E3 ubiquitin-protein ligase complex containing FBXO7; leading to proteasomal degradation.

The protein resides in the nucleus. The protein localises to the nucleolus. It localises to the nucleoplasm. Its subcellular location is the chromosome. It is found in the cytoplasm. It catalyses the reaction N(6)-acetyl-L-lysyl-[protein] + NAD(+) + H2O = 2''-O-acetyl-ADP-D-ribose + nicotinamide + L-lysyl-[protein]. The catalysed reaction is N(6)-glutaryl-L-lysyl-[protein] + NAD(+) + H2O = 2''-O-glutaryl-ADP-D-ribose + nicotinamide + L-lysyl-[protein]. It carries out the reaction N(6)-succinyl-L-lysyl-[protein] + NAD(+) + H2O = 2''-O-succinyl-ADP-D-ribose + nicotinamide + L-lysyl-[protein]. The enzyme catalyses N(6)-propanoyl-L-lysyl-[protein] + NAD(+) + H2O = 3''-O-propanoyl-ADP-D-ribose + nicotinamide + L-lysyl-[protein]. It catalyses the reaction N(6)-decanoyl-L-lysyl-[protein] + NAD(+) + H2O = 2''-O-decanoyl-ADP-D-ribose + nicotinamide + L-lysyl-[protein]. Its activity is regulated as follows. NAD-dependent protein-lysine deacetylase and deacylase activities are activated by nucleic acids. Histone deacetylase activity is activated by DNA. Protein-lysine deacylase activity is activated by RNA. H3K18Ac histone deacetylase activity is inhibited by methylation at Arg-388. H3K18Ac histone deacetylase activity is inhibited by deubiquitination by USP7. In terms of biological role, NAD-dependent protein-lysine deacylase that can act both as a deacetylase or deacylase (desuccinylase, depropionylase, deglutarylase and dedecanoylase), depending on the context. Specifically mediates deacetylation of histone H3 at 'Lys-18' (H3K18Ac). In contrast to other histone deacetylases, displays strong preference for a specific histone mark, H3K18Ac, directly linked to control of gene expression. H3K18Ac is mainly present around the transcription start site of genes and has been linked to activation of nuclear hormone receptors; SIRT7 thereby acts as a transcription repressor. Moreover, H3K18 hypoacetylation has been reported as a marker of malignancy in various cancers and seems to maintain the transformed phenotype of cancer cells. Also able to mediate deacetylation of histone H3 at 'Lys-36' (H3K36Ac) in the context of nucleosomes. Also mediates deacetylation of non-histone proteins, such as ATM, CDK9, DDX21, DDB1, FBL, FKBP5/FKBP51, GABPB1, RAN, RRP9/U3-55K and POLR1E/PAF53. Enriched in nucleolus where it stimulates transcription activity of the RNA polymerase I complex. Acts by mediating the deacetylation of the RNA polymerase I subunit POLR1E/PAF53, thereby promoting the association of RNA polymerase I with the rDNA promoter region and coding region. In response to metabolic stress, SIRT7 is released from nucleoli leading to hyperacetylation of POLR1E/PAF53 and decreased RNA polymerase I transcription. Required to restore the transcription of ribosomal RNA (rRNA) at the exit from mitosis. Promotes pre-ribosomal RNA (pre-rRNA) cleavage at the 5'-terminal processing site by mediating deacetylation of RRP9/U3-55K, a core subunit of the U3 snoRNP complex. Mediates 'Lys-37' deacetylation of Ran, thereby regulating the nuclear export of NF-kappa-B subunit RELA/p65. Acts as a regulator of DNA damage repair by mediating deacetylation of ATM during the late stages of DNA damage response, promoting ATM dephosphorylation and deactivation. Suppresses the activity of the DCX (DDB1-CUL4-X-box) E3 ubiquitin-protein ligase complexes by mediating deacetylation of DDB1, which prevents the interaction between DDB1 and CUL4 (CUL4A or CUL4B). Activates RNA polymerase II transcription by mediating deacetylation of CDK9, thereby promoting 'Ser-2' phosphorylation of the C-terminal domain (CTD) of RNA polymerase II. Deacetylates FBL, promoting histone-glutamine methyltransferase activity of FBL. Acts as a regulator of mitochondrial function by catalyzing deacetylation of GABPB1. Regulates Akt/AKT1 activity by mediating deacetylation of FKBP5/FKBP51. Required to prevent R-loop-associated DNA damage and transcription-associated genomic instability by mediating deacetylation and subsequent activation of DDX21, thereby overcoming R-loop-mediated stalling of RNA polymerases. In addition to protein deacetylase activity, also acts as a protein-lysine deacylase. Acts as a protein depropionylase by mediating depropionylation of Osterix (SP7), thereby regulating bone formation by osteoblasts. Acts as a histone deglutarylase by mediating deglutarylation of histone H4 on 'Lys-91' (H4K91glu); a mark that destabilizes nucleosomes by promoting dissociation of the H2A-H2B dimers from nucleosomes. Acts as a histone desuccinylase: in response to DNA damage, recruited to DNA double-strand breaks (DSBs) and catalyzes desuccinylation of histone H3 on 'Lys-122' (H3K122succ), thereby promoting chromatin condensation and DSB repair. Also promotes DSB repair by promoting H3K18Ac deacetylation, regulating non-homologous end joining (NHEJ). Along with its role in DNA repair, required for chromosome synapsis during prophase I of female meiosis by catalyzing H3K18Ac deacetylation. Involved in transcriptional repression of LINE-1 retrotransposon via H3K18Ac deacetylation, and promotes their association with the nuclear lamina. Required to stabilize ribosomal DNA (rDNA) heterochromatin and prevent cellular senescence induced by rDNA instability. Acts as a negative regulator of SIRT1 by preventing autodeacetylation of SIRT1, restricting SIRT1 deacetylase activity. The sequence is that of NAD-dependent protein deacetylase sirtuin-7 (SIRT7) from Bos taurus (Bovine).